Reading from the N-terminus, the 381-residue chain is Cytochrome b (381 aa).

A run of 4 helical transmembrane segments spans residues 32-52 (GGSL…LLAM), 76-98 (MILR…LHVL), 113-133 (VWIS…IGYV), and 179-199 (FYSF…FHIA). 2 residues coordinate heme b: histidine 82 and histidine 96. Heme b-binding residues include histidine 183 and histidine 197. Residue histidine 202 participates in a ubiquinone binding. Transmembrane regions (helical) follow at residues 225-245 (FGAK…ILVF), 289-309 (AMGV…PFIG), 318-338 (ITEW…WLGG), and 345-365 (TSFV…VCQP).

It belongs to the cytochrome b family. The main subunits of complex b-c1 are: cytochrome b, cytochrome c1 and the Rieske protein. Heme b serves as cofactor.

It localises to the mitochondrion inner membrane. In terms of biological role, component of the ubiquinol-cytochrome c reductase complex (complex III or cytochrome b-c1 complex) that is part of the mitochondrial respiratory chain. The b-c1 complex mediates electron transfer from ubiquinol to cytochrome c. Contributes to the generation of a proton gradient across the mitochondrial membrane that is then used for ATP synthesis. This is Cytochrome b (MT-CYB) from Chlamydomonas reinhardtii (Chlamydomonas smithii).